We begin with the raw amino-acid sequence, 326 residues long: Beta-ketoacyl-[acyl-carrier-protein] synthase III (326 aa).

Catalysis depends on residues Cys112 and His251. The interval 252–256 (QANSR) is ACP-binding. Asn281 is an active-site residue.

Belongs to the thiolase-like superfamily. FabH family. Homodimer.

The protein localises to the cytoplasm. It catalyses the reaction malonyl-[ACP] + acetyl-CoA + H(+) = 3-oxobutanoyl-[ACP] + CO2 + CoA. It participates in lipid metabolism; fatty acid biosynthesis. Catalyzes the condensation reaction of fatty acid synthesis by the addition to an acyl acceptor of two carbons from malonyl-ACP. Catalyzes the first condensation reaction which initiates fatty acid synthesis and may therefore play a role in governing the total rate of fatty acid production. Possesses both acetoacetyl-ACP synthase and acetyl transacylase activities. Its substrate specificity determines the biosynthesis of branched-chain and/or straight-chain of fatty acids. The protein is Beta-ketoacyl-[acyl-carrier-protein] synthase III of Clostridium botulinum (strain ATCC 19397 / Type A).